A 131-amino-acid chain; its full sequence is Large ribosomal subunit protein eL14 (131 aa).

This sequence belongs to the eukaryotic ribosomal protein eL14 family. Component of the large ribosomal subunit. Mature ribosomes consist of a small (40S) and a large (60S) subunit. The 40S subunit contains about 32 different proteins and 1 molecule of RNA (18S). The 60S subunit contains 45 different proteins and 3 molecules of RNA (25S, 5.8S and 5S).

The protein localises to the cytoplasm. Component of the ribosome, a large ribonucleoprotein complex responsible for the synthesis of proteins in the cell. The small ribosomal subunit (SSU) binds messenger RNAs (mRNAs) and translates the encoded message by selecting cognate aminoacyl-transfer RNA (tRNA) molecules. The large subunit (LSU) contains the ribosomal catalytic site termed the peptidyl transferase center (PTC), which catalyzes the formation of peptide bonds, thereby polymerizing the amino acids delivered by tRNAs into a polypeptide chain. The nascent polypeptides leave the ribosome through a tunnel in the LSU and interact with protein factors that function in enzymatic processing, targeting, and the membrane insertion of nascent chains at the exit of the ribosomal tunnel. This chain is Large ribosomal subunit protein eL14, found in Candida albicans (strain SC5314 / ATCC MYA-2876) (Yeast).